The primary structure comprises 480 residues: Porphobilinogen deaminase, chloroplastic (480 aa).

The N-terminal 139 residues, 1–139 (MYCGRYETIG…VSGGRIWSLA (139 aa)), are a transit peptide targeting the chloroplast. The residue at position 395 (C395) is an S-(dipyrrolylmethanemethyl)cysteine.

Belongs to the HMBS family. Dipyrromethane serves as cofactor.

The protein resides in the plastid. The protein localises to the chloroplast. It catalyses the reaction 4 porphobilinogen + H2O = hydroxymethylbilane + 4 NH4(+). It participates in porphyrin-containing compound metabolism; protoporphyrin-IX biosynthesis; coproporphyrinogen-III from 5-aminolevulinate: step 2/4. Its pathway is porphyrin-containing compound metabolism; chlorophyll biosynthesis. Tetrapolymerization of the monopyrrole PBG into the hydroxymethylbilane pre-uroporphyrinogen in several discrete steps. In Euglena gracilis, this protein is Porphobilinogen deaminase, chloroplastic.